Here is a 201-residue protein sequence, read N- to C-terminus: Glutathione peroxidase 1 (201 aa).

Serine 32 carries the phosphoserine modification. Residue selenocysteine 47 is part of the active site. A non-standard amino acid (selenocysteine) is located at residue selenocysteine 47. Residues lysine 86, lysine 112, and lysine 146 each carry the N6-acetyllysine; alternate modification. N6-succinyllysine; alternate occurs at positions 86, 112, and 146. Phosphoserine is present on residues serine 195 and serine 199.

Belongs to the glutathione peroxidase family. As to quaternary structure, homotetramer. Interacts with MIEN1. During periods of oxidative stress, Sec-47 may react with a superoxide radical, irreversibly lose hydroselenide and be converted to dehydroalanine.

Its subcellular location is the cytoplasm. The protein resides in the mitochondrion. It catalyses the reaction 2 glutathione + H2O2 = glutathione disulfide + 2 H2O. The enzyme catalyses a hydroperoxy polyunsaturated fatty acid + 2 glutathione = a hydroxy polyunsaturated fatty acid + glutathione disulfide + H2O. The catalysed reaction is tert-butyl hydroperoxide + 2 glutathione = tert-butanol + glutathione disulfide + H2O. It carries out the reaction cumene hydroperoxide + 2 glutathione = 2-phenylpropan-2-ol + glutathione disulfide + H2O. It catalyses the reaction (13S)-hydroperoxy-(9Z,11E)-octadecadienoate + 2 glutathione = (13S)-hydroxy-(9Z,11E)-octadecadienoate + glutathione disulfide + H2O. The enzyme catalyses (9S)-hydroperoxy-(10E,12Z)-octadecadienoate + 2 glutathione = (9S)-hydroxy-(10E,12Z)-octadecadienoate + glutathione disulfide + H2O. The catalysed reaction is (5S)-hydroperoxy-(6E,8Z,11Z,14Z)-eicosatetraenoate + 2 glutathione = (5S)-hydroxy-(6E,8Z,11Z,14Z)-eicosatetraenoate + glutathione disulfide + H2O. It carries out the reaction (12S)-hydroperoxy-(5Z,8Z,10E,14Z)-eicosatetraenoate + 2 glutathione = (12S)-hydroxy-(5Z,8Z,10E,14Z)-eicosatetraenoate + glutathione disulfide + H2O. It catalyses the reaction (12R)-hydroperoxy-(5Z,8Z,10E,14Z)-eicosatetraenoate + 2 glutathione = (12R)-hydroxy-(5Z,8Z,10E,14Z)-eicosatetraenoate + glutathione disulfide + H2O. The enzyme catalyses (15S)-hydroperoxy-(5Z,8Z,11Z,13E)-eicosatetraenoate + 2 glutathione = (15S)-hydroxy-(5Z,8Z,11Z,13E)-eicosatetraenoate + glutathione disulfide + H2O. The catalysed reaction is (5S)-hydroperoxy-(6E,8Z,11Z,14Z,17Z)-eicosapentaenoate + 2 glutathione = (5S)-hydroxy-(6E,8Z,11Z,14Z,17Z)-eicosapentaenoate + glutathione disulfide + H2O. It carries out the reaction (12S)-hydroperoxy-(5Z,8Z,10E,14Z,17Z)-eicosapentaenoate + 2 glutathione = (12S)-hydroxy-(5Z,8Z,10E,14Z,17Z)-eicosapentaenoate + glutathione disulfide + H2O. It catalyses the reaction (15S)-hydroperoxy-(5Z,8Z,11Z,13E,17Z)-eicosapentaenoate + 2 glutathione = (15S)-hydroxy-(5Z,8Z,11Z,13E,17Z)-eicosapentaenoate + glutathione disulfide + H2O. The enzyme catalyses (15S)-hydroperoxy-(11Z,13E)-eicosadienoate + 2 glutathione = (15S)-hydroxy-(11Z,13E)-eicosadienoate + glutathione disulfide + H2O. The catalysed reaction is (17S)-hydroperoxy-(4Z,7Z,10Z,13Z,15E,19Z)-docosahexaenoate + 2 glutathione = (17S)-hydroxy-(4Z,7Z,10Z,13Z,15E,19Z)-docosahexaenoate + glutathione disulfide + H2O. Functionally, catalyzes the reduction of hydroperoxides in a glutathione-dependent manner thus regulating cellular redox homeostasis. Can reduce small soluble hydroperoxides such as H2O2, cumene hydroperoxide and tert-butyl hydroperoxide, as well as several fatty acid-derived hydroperoxides. In platelets catalyzes the reduction of 12-hydroperoxyeicosatetraenoic acid, the primary product of the arachidonate 12-lipoxygenase pathway. The protein is Glutathione peroxidase 1 (GPX1) of Macaca fuscata fuscata (Japanese macaque).